The following is a 188-amino-acid chain: ATP synthase subunit b 1 (188 aa).

A helical membrane pass occupies residues 7 to 27 (LSVLALAMLAANPAFAAGGGI).

This sequence belongs to the ATPase B chain family. In terms of assembly, F-type ATPases have 2 components, F(1) - the catalytic core - and F(0) - the membrane proton channel. F(1) has five subunits: alpha(3), beta(3), gamma(1), delta(1), epsilon(1). F(0) has three main subunits: a(1), b(2) and c(10-14). The alpha and beta chains form an alternating ring which encloses part of the gamma chain. F(1) is attached to F(0) by a central stalk formed by the gamma and epsilon chains, while a peripheral stalk is formed by the delta and b chains.

Its subcellular location is the cell inner membrane. In terms of biological role, f(1)F(0) ATP synthase produces ATP from ADP in the presence of a proton or sodium gradient. F-type ATPases consist of two structural domains, F(1) containing the extramembraneous catalytic core and F(0) containing the membrane proton channel, linked together by a central stalk and a peripheral stalk. During catalysis, ATP synthesis in the catalytic domain of F(1) is coupled via a rotary mechanism of the central stalk subunits to proton translocation. Its function is as follows. Component of the F(0) channel, it forms part of the peripheral stalk, linking F(1) to F(0). This chain is ATP synthase subunit b 1, found in Roseobacter denitrificans (strain ATCC 33942 / OCh 114) (Erythrobacter sp. (strain OCh 114)).